We begin with the raw amino-acid sequence, 202 residues long: Imidazoleglycerol-phosphate dehydratase (202 aa).

Belongs to the imidazoleglycerol-phosphate dehydratase family.

Its subcellular location is the cytoplasm. It carries out the reaction D-erythro-1-(imidazol-4-yl)glycerol 3-phosphate = 3-(imidazol-4-yl)-2-oxopropyl phosphate + H2O. Its pathway is amino-acid biosynthesis; L-histidine biosynthesis; L-histidine from 5-phospho-alpha-D-ribose 1-diphosphate: step 6/9. In Acinetobacter baumannii (strain SDF), this protein is Imidazoleglycerol-phosphate dehydratase.